The sequence spans 60 residues: Large ribosomal subunit protein eL37 (60 aa).

Zn(2+)-binding residues include C19, C22, C34, and C37. The segment at 19–37 adopts a C4-type zinc-finger fold; the sequence is CRRCGSISYHARHKVCSAC.

It belongs to the eukaryotic ribosomal protein eL37 family. Requires Zn(2+) as cofactor.

In terms of biological role, binds to the 23S rRNA. The sequence is that of Large ribosomal subunit protein eL37 from Methanosphaerula palustris (strain ATCC BAA-1556 / DSM 19958 / E1-9c).